Reading from the N-terminus, the 417-residue chain is COP9 signalosome complex subunit 7a (417 aa).

Positions 2-179 constitute a PCI domain; sequence EQTKALNALE…EMVQINSVAA (178 aa). The tract at residues 240–417 is disordered; that stretch reads DEQKGAVPSS…KRGSKRKLTA (178 aa). The segment covering 263–290 has biased composition (gly residues); sequence RGGGGGGDGAGAGGSFRGSGYSRGGGLS. Composition is skewed to low complexity over residues 291–311, 320–330, and 343–352; these read QGYR…SRQQ, SNQSGTNSLLT, and PSAVSPSAAA. Residues 367-379 show a composition bias toward gly residues; it reads METGSGSGSGPLG. The segment covering 385-405 has biased composition (acidic residues); that stretch reads DMDDSEEDIDDDTMDLDDEGD.

Belongs to the CSN7/EIF3M family. CSN7 subfamily. In terms of assembly, component of the COP9 signalosome (CSN) complex.

It localises to the cytoplasm. Its subcellular location is the nucleus. Functionally, component of the COP9 signalosome (CSN) complex that acts as an regulator of the ubiquitin (Ubl) conjugation pathway by mediating the deneddylation of the cullin subunit of SCF-type E3 ubiquitin-protein ligase complexes. The CSN complex is involved in the regulation of the circadian clock through its control of the stability of the SCF(FWD1) complex. This chain is COP9 signalosome complex subunit 7a (csn-7a), found in Neurospora crassa (strain ATCC 24698 / 74-OR23-1A / CBS 708.71 / DSM 1257 / FGSC 987).